An 87-amino-acid chain; its full sequence is Large ribosomal subunit protein eL20 (87 aa).

This sequence belongs to the eukaryotic ribosomal protein eL20 family. In terms of assembly, part of the 50S ribosomal subunit. Binds 23S rRNA.

This chain is Large ribosomal subunit protein eL20, found in Staphylothermus marinus (strain ATCC 43588 / DSM 3639 / JCM 9404 / F1).